Here is a 1382-residue protein sequence, read N- to C-terminus: Hepatocyte growth factor receptor (1382 aa).

The N-terminal stretch at 1-24 is a signal peptide; the sequence is MKAPAVLAPGILVLLFTLVPRSHG. Topologically, residues 25 to 933 are extracellular; it reads ECKEALVKSE…VIVQPDQNFM (909 aa). The Sema domain maps to 27 to 516; the sequence is KEALVKSEMN…TGNKITKIPL (490 aa). The N-linked (GlcNAc...) asparagine glycan is linked to asparagine 45. 4 cysteine pairs are disulfide-bonded: cysteine 95–cysteine 101, cysteine 98–cysteine 160, cysteine 133–cysteine 141, and cysteine 173–cysteine 176. N-linked (GlcNAc...) asparagine glycosylation occurs at asparagine 106. 2 N-linked (GlcNAc...) asparagine glycosylation sites follow: asparagine 203 and asparagine 359. Disulfide bonds link cysteine 299–cysteine 364 and cysteine 386–cysteine 398. N-linked (GlcNAc...) asparagine glycosylation is found at asparagine 400 and asparagine 406. 4 disulfide bridges follow: cysteine 521-cysteine 539, cysteine 527-cysteine 562, cysteine 530-cysteine 546, and cysteine 542-cysteine 552. IPT/TIG domains lie at 564–656, 658–740, and 743–837; these read PAIY…FSYV, PVIT…FSYR, and PIVD…LTYV. O-linked (Man) threonine glycosylation occurs at threonine 583. N-linked (GlcNAc...) asparagine glycans are attached at residues asparagine 608, asparagine 614, and asparagine 636. 2 O-linked (Man) threonine glycosylation sites follow: threonine 677 and threonine 762. Asparagine 786 and asparagine 880 each carry an N-linked (GlcNAc...) asparagine glycan. A helical membrane pass occupies residues 934–956; that stretch reads GLIVGGVSISIILLLLLGLFLWL. Over 957–1382 the chain is Cytoplasmic; that stretch reads KKKKRIKDLG…QDNVDGTVDT (426 aa). Serine 967 bears the Phosphoserine mark. Threonine 978 carries the phosphothreonine modification. Phosphoserine is present on residues serine 991, serine 998, and serine 1001. Position 1004 is a phosphotyrosine (tyrosine 1004). Residues 1079-1346 enclose the Protein kinase domain; it reads VHFSEVIGRG…RISTIFSTFI (268 aa). ATP-binding positions include 1085-1093 and lysine 1111; that span reads IGRGHFGCV. The Proton acceptor role is filled by aspartate 1205. Residues 1213 to 1382 form an interaction with RANBP9 region; the sequence is LDEKFTVKVA…QDNVDGTVDT (170 aa). Tyrosine 1231 bears the Phosphotyrosine mark. 2 positions are modified to phosphotyrosine; by autocatalysis: tyrosine 1235 and tyrosine 1236. At threonine 1290 the chain carries Phosphothreonine. The tract at residues 1321-1360 is interaction with MUC20; the sequence is WHPKAEMRPSFSELVSRISTIFSTFIGEHYVHVNATYVNV. Tyrosine 1350 and tyrosine 1357 each carry phosphotyrosine; by autocatalysis. Phosphotyrosine is present on tyrosine 1366.

It belongs to the protein kinase superfamily. Tyr protein kinase family. In terms of assembly, heterodimer made of an alpha chain (50 kDa) and a beta chain (145 kDa) which are disulfide linked. Binds PLXNB1. Interacts when phosphorylated with downstream effectors including STAT3, PIK3R1, SRC, PCLG1, GRB2 and GAB1. Interacts with SPSB1, SPSB2 and SPSB4. Interacts with INPP5D/SHIP1. When phosphorylated at Tyr-1357, interacts with INPPL1/SHIP2. Interacts with RANBP9 and RANBP10, as well as SPSB1, SPSB2, SPSB3 and SPSB4. SPSB1 binding occurs in the presence and in the absence of HGF, however HGF treatment has a positive effect on this interaction. Interacts with MUC20; prevents interaction with GRB2 and suppresses hepatocyte growth factor-induced cell proliferation. Interacts with GRB10. Interacts with PTPN1 and PTPN2. Interacts with HSP90AA1 and HSP90AB1; the interaction suppresses MET kinase activity. Interacts with tensin TNS3. Interacts (when phosphorylated) with tensin TNS4 (via SH2 domain); the interaction increases MET protein stability by inhibiting MET endocytosis and subsequent lysosomal degradation. Post-translationally, autophosphorylated in response to ligand binding on Tyr-1235 and Tyr-1236 in the kinase domain leading to further phosphorylation of Tyr-1350 and Tyr-1357 in the C-terminal multifunctional docking site. Dephosphorylated by PTPRJ at Tyr-1350 and Tyr-1366. Dephosphorylated by PTPN1 and PTPN2. Ubiquitinated. Ubiquitination by CBL regulates the receptor stability and activity through proteasomal degradation. In terms of processing, O-mannosylation of IPT/TIG domains by TMEM260 is required for protein maturation. O-mannosylated residues are composed of single mannose glycans that are not elongated or modified.

The protein localises to the membrane. The catalysed reaction is L-tyrosyl-[protein] + ATP = O-phospho-L-tyrosyl-[protein] + ADP + H(+). With respect to regulation, in its inactive state, the C-terminal tail interacts with the catalytic domain and inhibits the kinase activity. Upon ligand binding, the C-terminal tail is displaced and becomes phosphorylated, thus increasing the kinase activity. Receptor tyrosine kinase that transduces signals from the extracellular matrix into the cytoplasm by binding to hepatocyte growth factor/HGF ligand. Regulates many physiological processes including proliferation, scattering, morphogenesis and survival. Ligand binding at the cell surface induces autophosphorylation of MET on its intracellular domain that provides docking sites for downstream signaling molecules. Following activation by ligand, interacts with the PI3-kinase subunit PIK3R1, PLCG1, SRC, GRB2, STAT3 or the adapter GAB1. Recruitment of these downstream effectors by MET leads to the activation of several signaling cascades including the RAS-ERK, PI3 kinase-AKT, or PLCgamma-PKC. The RAS-ERK activation is associated with the morphogenetic effects while PI3K/AKT coordinates prosurvival effects. During embryonic development, MET signaling plays a role in gastrulation, development and migration of muscles and neuronal precursors, angiogenesis and kidney formation. In adults, participates in wound healing as well as organ regeneration and tissue remodeling. Also promotes differentiation and proliferation of hematopoietic cells. The chain is Hepatocyte growth factor receptor (MET) from Oryctolagus cuniculus (Rabbit).